Here is a 215-residue protein sequence, read N- to C-terminus: Urease accessory protein UreE (215 aa).

The disordered stretch occupies residues 134–215; it reads FDPEGGAYAP…HGHSHKHDHK (82 aa). Residues 164-206 show a composition bias toward basic and acidic residues; the sequence is GHHDHADHEHDHKHDHGKHDHAGHDHAHDHHVHDEHCGHDHGH.

Belongs to the UreE family.

Its subcellular location is the cytoplasm. Its function is as follows. Involved in urease metallocenter assembly. Binds nickel. Probably functions as a nickel donor during metallocenter assembly. This chain is Urease accessory protein UreE, found in Rhodopseudomonas palustris (strain HaA2).